The following is an 887-amino-acid chain: Alanine--tRNA ligase (887 aa).

The Zn(2+) site is built by His-581, His-585, Cys-683, and His-687.

This sequence belongs to the class-II aminoacyl-tRNA synthetase family. Requires Zn(2+) as cofactor.

It is found in the cytoplasm. It carries out the reaction tRNA(Ala) + L-alanine + ATP = L-alanyl-tRNA(Ala) + AMP + diphosphate. In terms of biological role, catalyzes the attachment of alanine to tRNA(Ala) in a two-step reaction: alanine is first activated by ATP to form Ala-AMP and then transferred to the acceptor end of tRNA(Ala). Also edits incorrectly charged Ser-tRNA(Ala) and Gly-tRNA(Ala) via its editing domain. This is Alanine--tRNA ligase from Ehrlichia ruminantium (strain Gardel).